The following is a 277-amino-acid chain: Adenylate kinase (277 aa).

72-77 contacts ATP; that stretch reads GAGKGT. An NMP region spans residues 92–121; the sequence is ATGDMLRSQVAKQTALGVQAKKIMDQGGLV. AMP-binding positions include T93, R98, 119 to 121, 148 to 151, and Q155; these read GLV and GFPR. The LID stretch occupies residues 189 to 226; that stretch reads GRLVHPASGRSYHKLFNPPKVAMTDDVTGDPLVQRSDD. ATP is bound by residues R190 and 199–200; that span reads SY. AMP is bound by residues R223 and R234. Residue Q262 coordinates ATP.

It belongs to the adenylate kinase family. AK2 subfamily. Monomer.

The protein localises to the cytoplasm. It localises to the cytosol. The protein resides in the mitochondrion intermembrane space. It carries out the reaction AMP + ATP = 2 ADP. Its function is as follows. Catalyzes the reversible transfer of the terminal phosphate group between ATP and AMP. Plays an important role in cellular energy homeostasis and in adenine nucleotide metabolism. Adenylate kinase activity is critical for regulation of the phosphate utilization and the AMP de novo biosynthesis pathways. This is Adenylate kinase from Eremothecium gossypii (strain ATCC 10895 / CBS 109.51 / FGSC 9923 / NRRL Y-1056) (Yeast).